The primary structure comprises 508 residues: Photosystem II CP47 reaction center protein (508 aa).

6 helical membrane-spanning segments follow: residues 21-36 (SVHIMHTALVAGWAGS), 101-115 (IVFSGLCFLAAIWHW), 140-156 (GIHLFLSGVACFGFGAF), 203-218 (IAAGTLGILAGLFHLS), 237-252 (VLSSSIAAVFFAAFVV), and 457-472 (SFALLFFFGHIWHGAR).

The protein belongs to the PsbB/PsbC family. PsbB subfamily. In terms of assembly, PSII is composed of 1 copy each of membrane proteins PsbA, PsbB, PsbC, PsbD, PsbE, PsbF, PsbH, PsbI, PsbJ, PsbK, PsbL, PsbM, PsbT, PsbX, PsbY, PsbZ, Psb30/Ycf12, at least 3 peripheral proteins of the oxygen-evolving complex and a large number of cofactors. It forms dimeric complexes. It depends on Binds multiple chlorophylls. PSII binds additional chlorophylls, carotenoids and specific lipids. as a cofactor.

It is found in the plastid. It localises to the chloroplast thylakoid membrane. In terms of biological role, one of the components of the core complex of photosystem II (PSII). It binds chlorophyll and helps catalyze the primary light-induced photochemical processes of PSII. PSII is a light-driven water:plastoquinone oxidoreductase, using light energy to abstract electrons from H(2)O, generating O(2) and a proton gradient subsequently used for ATP formation. In Morus indica (Mulberry), this protein is Photosystem II CP47 reaction center protein.